A 25-amino-acid chain; its full sequence is Ocellatin-P1 (25 aa).

L25 is subject to Leucine amide.

Expressed by the skin glands.

The protein localises to the secreted. Antibacterial peptide that inhibits reference strains of both Gram-negative bacteria (E.coli, E.cloacae, K.pneumoniae, P.aeruginosa) and Gram-positive bacteria (S.aureus, S.epidermidis, E.faecalis, Streptococcus group B) with relatively low potencies (MIC=25-200 uM). The peptide shows very low hemolytic activity against human erythrocytes. Wheel projection demonstrates the amphipathicity of the alpha-helices is low which may explain the low antibacterial potency. The polypeptide is Ocellatin-P1 (Leptodactylus pentadactylus (Smokey jungle frog)).